The sequence spans 338 residues: MKRLALALKQRKVASWKLEEVKELTELIKNSNTILIGNLEGFPADKLHEIRKKLRGKATIKVTKNTLFKIAAKNAGIDIEKLEQYLTGPNVFIFTKDNPFITNMFFENYKLRRYAMPGDKAEEEVVIPAGDTGMPAGPILSVFGKLKVQTKVQDGKVHVVKDTVVAKPGDVIPAEALPILQKLGIMPVYVKLKIKVAYHEGLVIPAESLKLDLEGYRSNITEAYRNAFTLAVEIAYPTPDVLKFTISKVFKNAIALASEIGYITPESAQAVISKAVAKAYALATAIGGKVDLGVQLPTVQQSQSQQPAAEEKKEEKKEEEKKGPSEEEIASGLASLFG.

The tract at residues 298-338 (TVQQSQSQQPAAEEKKEEKKEEEKKGPSEEEIASGLASLFG) is disordered. The segment covering 309–325 (AEEKKEEKKEEEKKGPS) has biased composition (basic and acidic residues).

It belongs to the universal ribosomal protein uL10 family. Part of the 50S ribosomal subunit. Forms part of the ribosomal stalk which helps the ribosome interact with GTP-bound translation factors. Forms a heptameric L10(L12)2(L12)2(L12)2 complex, where L10 forms an elongated spine to which the L12 dimers bind in a sequential fashion.

In terms of biological role, forms part of the ribosomal stalk, playing a central role in the interaction of the ribosome with GTP-bound translation factors. This Saccharolobus solfataricus (strain ATCC 35092 / DSM 1617 / JCM 11322 / P2) (Sulfolobus solfataricus) protein is Large ribosomal subunit protein uL10.